The primary structure comprises 315 residues: Acetyl-coenzyme A carboxylase carboxyl transferase subunit alpha (315 aa).

Residues 40 to 293 (LEDKKIALTK…KKNVLAALDR (254 aa)) enclose the CoA carboxyltransferase C-terminal domain.

It belongs to the AccA family. In terms of assembly, acetyl-CoA carboxylase is a heterohexamer composed of biotin carboxyl carrier protein (AccB), biotin carboxylase (AccC) and two subunits each of ACCase subunit alpha (AccA) and ACCase subunit beta (AccD).

Its subcellular location is the cytoplasm. It carries out the reaction N(6)-carboxybiotinyl-L-lysyl-[protein] + acetyl-CoA = N(6)-biotinyl-L-lysyl-[protein] + malonyl-CoA. Its pathway is lipid metabolism; malonyl-CoA biosynthesis; malonyl-CoA from acetyl-CoA: step 1/1. Its function is as follows. Component of the acetyl coenzyme A carboxylase (ACC) complex. First, biotin carboxylase catalyzes the carboxylation of biotin on its carrier protein (BCCP) and then the CO(2) group is transferred by the carboxyltransferase to acetyl-CoA to form malonyl-CoA. This chain is Acetyl-coenzyme A carboxylase carboxyl transferase subunit alpha, found in Marinomonas sp. (strain MWYL1).